A 116-amino-acid polypeptide reads, in one-letter code: uncharacterized protein (116 aa).

Residues 97-116 (AKGKGNEGREEAEEASGKSK) form a disordered region. Residues 100–116 (KGNEGREEAEEASGKSK) are compositionally biased toward basic and acidic residues.

The protein belongs to the UPF0440 family.

This is an uncharacterized protein from Pyrococcus horikoshii (strain ATCC 700860 / DSM 12428 / JCM 9974 / NBRC 100139 / OT-3).